A 906-amino-acid chain; its full sequence is Inactive angiotensin-converting enzyme-related protein (906 aa).

The signal sequence occupies residues 1 to 19 (MKFHILLLLLVGACLPVFT). The tract at residues 28 to 95 (LLPADEAPKD…SPTPEPEPAI (68 aa)) is disordered. The span at 67 to 83 (PEPKPEPEPEPEPKPEP) shows a compositional bias: basic and acidic residues. Residue asparagine 159 is glycosylated (N-linked (GlcNAc...) asparagine). Positions 175 to 765 (IKDEEKLRSW…EIDQVVVGWD (591 aa)) constitute a Peptidase M2 domain. Residues cysteine 289 and cysteine 297 are joined by a disulfide bond. N-linked (GlcNAc...) asparagine glycosylation is present at asparagine 653. A disordered region spans residues 862-882 (VTTPEPSAEPEPTAKTTTKMP). A compositionally biased stretch (low complexity) spans 863–882 (TTPEPSAEPEPTAKTTTKMP).

Belongs to the peptidase M2 family. In terms of tissue distribution, expressed in the hypodermis, in the vulva during organogenesis, and in the ray papillae of the male tail.

Inactive as a metallopeptidase, due to a lack of active site residues. Required for larval molting, male tail development, and formation of adult alae. Acts in the heterochronic pathway and plays a role in the developmental timing of postembryonic hypodermal seam cell division and adult alae production. Acts synergistically with apl-1 in let-7 regulated postembryonic cell division events. Might act downstream of the heterochronic protein lin-41. Negative regulator of lifespan, heat and oxidative stress response and age-related degenerative changes like reduced pharyngeal pumping and decreased body movements. Lifespan restriction is dependent on the forkhead-type transcription factor daf-16. In Caenorhabditis elegans, this protein is Inactive angiotensin-converting enzyme-related protein.